The primary structure comprises 209 residues: Mitotic spindle checkpoint protein MAD2 (209 aa).

The region spanning 15–198 (HGSAAIVSEF…TKIHKVDTLV (184 aa)) is the HORMA domain.

Belongs to the MAD2 family. As to quaternary structure, part of the mitotic checkpoint complex (MCC); interacts with MAD1, CDC20-1, CDC20-2 and CDC20-5. Interacts with BUBR1 at chromocenters and with BUB3.1. Interacts with EIF4B3. As to expression, expressed in actively dividing tissues, early in organ development, in young leaves, lateral root primordia and root meristems.

Its subcellular location is the nucleus. It is found in the nucleus envelope. The protein localises to the chromosome. The protein resides in the centromere. It localises to the kinetochore. Its subcellular location is the cytoplasm. It is found in the cytoskeleton. The protein localises to the spindle. In terms of biological role, required for the execution of the mitotic checkpoint which monitors the process of kinetochore-spindle attachment and delays the onset of anaphase when this process is not complete. It inhibits the activity of the anaphase promoting complex by sequestering CDC20 until all chromosomes are aligned at the metaphase plate. This Arabidopsis thaliana (Mouse-ear cress) protein is Mitotic spindle checkpoint protein MAD2.